The sequence spans 218 residues: Thiopurine S-methyltransferase (218 aa).

Residues Trp10, Leu45, Glu66, and Arg123 each coordinate S-adenosyl-L-methionine.

This sequence belongs to the class I-like SAM-binding methyltransferase superfamily. TPMT family.

It is found in the cytoplasm. The enzyme catalyses S-adenosyl-L-methionine + a thiopurine = S-adenosyl-L-homocysteine + a thiopurine S-methylether.. This chain is Thiopurine S-methyltransferase, found in Shewanella baltica (strain OS223).